The chain runs to 378 residues: MLWHLVFILIAILLLTFSPKIESLFKSFTINKPTKTTCYQYTTREQLKSILESDTHETNFCIEKPSISPPKTNSTLLMLCRNSDVFSVLETIQNIQDRFNDKYNYDYTFLNDVPFNYEFIYLVSSIIPHGKINFGLIPIEHWSYPSHINISLATEIRQNYANVPYGDSESYRHMCRFYSGFFYKHELVKQYQYYWRIEPGIKIYCDIDYDVFEYMIINDKKYGFVISLFEYSETIPTLWNHVVQYINDNEIKSELLPLLTNKYNWYNLCHFWSNFEIANLDIFNNDDYENFFQYLDNLGGFYYERWGDAPIHSIAIALFLQKKDIHWFENIGYYHVPYLQCPQDIDLYVKNKCTCNPDEDFTWSDLSCTNHFLNILHN.

The Cytoplasmic segment spans residues 1 to 4 (MLWH). A helical; Signal-anchor for type II membrane protein transmembrane segment spans residues 5–25 (LVFILIAILLLTFSPKIESLF). The Lumenal segment spans residues 26 to 378 (KSFTINKPTK…TNHFLNILHN (353 aa)). N-linked (GlcNAc...) asparagine glycans are attached at residues Asn73 and Asn149.

Belongs to the glycosyltransferase 15 family.

Its subcellular location is the membrane. Transfers an alpha-D-mannosyl residue from GDP-mannose into lipid-linked oligosaccharide, forming an alpha-(1-&gt;2)-D-mannosyl-D-mannose linkage. This is Probable mannosyltransferase MNT3 (MNT3) from Candida albicans (strain SC5314 / ATCC MYA-2876) (Yeast).